Consider the following 544-residue polypeptide: Chaperonin GroEL 2 (544 aa).

Residues 29–32 (TLGP), 86–90 (DGTTT), Gly-413, 479–481 (NAA), and Asp-495 contribute to the ATP site.

Belongs to the chaperonin (HSP60) family. Forms a cylinder of 14 subunits composed of two heptameric rings stacked back-to-back. Interacts with the co-chaperonin GroES.

The protein localises to the cytoplasm. It carries out the reaction ATP + H2O + a folded polypeptide = ADP + phosphate + an unfolded polypeptide.. Functionally, together with its co-chaperonin GroES, plays an essential role in assisting protein folding. The GroEL-GroES system forms a nano-cage that allows encapsulation of the non-native substrate proteins and provides a physical environment optimized to promote and accelerate protein folding. The protein is Chaperonin GroEL 2 of Prochlorococcus marinus subsp. pastoris (strain CCMP1986 / NIES-2087 / MED4).